A 513-amino-acid polypeptide reads, in one-letter code: MQLNPSEISELIKSRISGLGADAEVRNTGTVISVTDGICRVHGLSGVMQGEMLEFPGNTFGLALNLERDSVGAVVLGDYEHISEGDTVKCTGRILEVPVGKELLGRVVNTLGQPIDGKGPINAKETDVIEKVAPGVIARQSVSQPVQTGLKSIDSMVPIGRGQRELIIGDRQTGKTAVAVDAIINQKGKGIFCVYVAIGQKASTIANVVRKLEEHGAMEYTVVVAAAASDSAAMQYLAAYAGCTMGEYFRDRGEDALIVYDDLTKQAWAYRQVSLLLRRPPGREAYPGDVFYLHSRLLERAARVNEEYVENFTKGAVKGKTGSLTALPIIETQAGDVSAFVPTNVISITDGQIFLETDLFNAGIRPAINAGISVSRVGGAAQTKVVKNLSGGIRTDLAQYRELAAFAQFASDLDDATRKQLERGRRVTELLKQAQYQPQQVWQLAASLFAANNGFLDNVEVKDILPFEKGLHDHLKTKYADLVNRIEETKVLSKEDEPALRAAIEDFRKSAAF.

169–176 (GDRQTGKT) serves as a coordination point for ATP.

This sequence belongs to the ATPase alpha/beta chains family. In terms of assembly, F-type ATPases have 2 components, CF(1) - the catalytic core - and CF(0) - the membrane proton channel. CF(1) has five subunits: alpha(3), beta(3), gamma(1), delta(1), epsilon(1). CF(0) has three main subunits: a(1), b(2) and c(9-12). The alpha and beta chains form an alternating ring which encloses part of the gamma chain. CF(1) is attached to CF(0) by a central stalk formed by the gamma and epsilon chains, while a peripheral stalk is formed by the delta and b chains.

The protein resides in the cell inner membrane. The catalysed reaction is ATP + H2O + 4 H(+)(in) = ADP + phosphate + 5 H(+)(out). Functionally, produces ATP from ADP in the presence of a proton gradient across the membrane. The alpha chain is a regulatory subunit. The protein is ATP synthase subunit alpha of Cupriavidus pinatubonensis (strain JMP 134 / LMG 1197) (Cupriavidus necator (strain JMP 134)).